We begin with the raw amino-acid sequence, 556 residues long: Oxygen-dependent choline dehydrogenase (556 aa).

Residue 6–35 coordinates FAD; that stretch reads DYIIIGAGSAGNVLAARLTEDPGVTVLLLE. Catalysis depends on H475, which acts as the Proton acceptor.

This sequence belongs to the GMC oxidoreductase family. It depends on FAD as a cofactor.

It catalyses the reaction choline + A = betaine aldehyde + AH2. It carries out the reaction betaine aldehyde + NAD(+) + H2O = glycine betaine + NADH + 2 H(+). It functions in the pathway amine and polyamine biosynthesis; betaine biosynthesis via choline pathway; betaine aldehyde from choline (cytochrome c reductase route): step 1/1. Its function is as follows. Involved in the biosynthesis of the osmoprotectant glycine betaine. Catalyzes the oxidation of choline to betaine aldehyde and betaine aldehyde to glycine betaine at the same rate. This Xanthomonas axonopodis pv. citri (strain 306) protein is Oxygen-dependent choline dehydrogenase.